Consider the following 161-residue polypeptide: Phosphopantetheine adenylyltransferase (161 aa).

Thr9 contacts substrate. ATP-binding positions include 9–10 (TF) and His17. The substrate site is built by Lys41, Leu73, and Arg87. Residues 88–90 (GLR), Glu98, and 123–129 (YQFISGT) contribute to the ATP site.

The protein belongs to the bacterial CoaD family. As to quaternary structure, homohexamer. It depends on Mg(2+) as a cofactor.

Its subcellular location is the cytoplasm. It carries out the reaction (R)-4'-phosphopantetheine + ATP + H(+) = 3'-dephospho-CoA + diphosphate. It participates in cofactor biosynthesis; coenzyme A biosynthesis; CoA from (R)-pantothenate: step 4/5. Functionally, reversibly transfers an adenylyl group from ATP to 4'-phosphopantetheine, yielding dephospho-CoA (dPCoA) and pyrophosphate. This Cupriavidus metallidurans (strain ATCC 43123 / DSM 2839 / NBRC 102507 / CH34) (Ralstonia metallidurans) protein is Phosphopantetheine adenylyltransferase.